Consider the following 126-residue polypeptide: MRHYEIVFMVHPDQSEQVPGMIERYTASVKEAGGQVHRLEDWGRRQLAYPINKLHKAHYVLMNVEAPQNVIDELETNFRYNDAVLRSLVLHTKAAVTEASPMLKAKDERKAPEALVEEVEAEDADE.

The disordered stretch occupies residues 103–126 (LKAKDERKAPEALVEEVEAEDADE). Acidic residues predominate over residues 115 to 126 (LVEEVEAEDADE).

The protein belongs to the bacterial ribosomal protein bS6 family.

Functionally, binds together with bS18 to 16S ribosomal RNA. In Glaesserella parasuis serovar 5 (strain SH0165) (Haemophilus parasuis), this protein is Small ribosomal subunit protein bS6.